A 93-amino-acid chain; its full sequence is YcgL domain-containing protein Shew_2183 (93 aa).

Positions 1 to 85 (MICAVYKSRL…PPVNLLEEYK (85 aa)) constitute a YcgL domain.

The polypeptide is YcgL domain-containing protein Shew_2183 (Shewanella loihica (strain ATCC BAA-1088 / PV-4)).